Here is a 456-residue protein sequence, read N- to C-terminus: GTPase Der (456 aa).

2 EngA-type G domains span residues 4-169 and 177-352; these read PIVA…PAVE and IKVA…ESHK. GTP is bound by residues 10 to 17, 57 to 61, 120 to 123, 183 to 190, 230 to 234, and 295 to 298; these read GRPNVGKS, DTGGL, NKCE, DTAGI, and NKWD. The region spanning 353-438 is the KH-like domain; the sequence is RRVSTSVINE…PIILLWRSKK (86 aa).

This sequence belongs to the TRAFAC class TrmE-Era-EngA-EngB-Septin-like GTPase superfamily. EngA (Der) GTPase family. In terms of assembly, associates with the 50S ribosomal subunit.

Its function is as follows. GTPase that plays an essential role in the late steps of ribosome biogenesis. The chain is GTPase Der from Nostoc punctiforme (strain ATCC 29133 / PCC 73102).